The chain runs to 116 residues: Ig heavy chain V-A1 region BS-5 (116 aa).

A Pyrrolidone carboxylic acid modification is found at glutamine 1. Positions 1–107 constitute an Ig-like domain; sequence QSVEESGGRL…LVHLAFVDVW (107 aa).

In Oryctolagus cuniculus (Rabbit), this protein is Ig heavy chain V-A1 region BS-5.